Reading from the N-terminus, the 252-residue chain is Cell division protein ZapD (252 aa).

The protein belongs to the ZapD family. Interacts with FtsZ.

It is found in the cytoplasm. In terms of biological role, cell division factor that enhances FtsZ-ring assembly. Directly interacts with FtsZ and promotes bundling of FtsZ protofilaments, with a reduction in FtsZ GTPase activity. In Ralstonia nicotianae (strain ATCC BAA-1114 / GMI1000) (Ralstonia solanacearum), this protein is Cell division protein ZapD.